Here is a 134-residue protein sequence, read N- to C-terminus: Transmembrane protein 100 (134 aa).

2 helical membrane passes run 56-76 and 84-104; these read CIIP…AVAY and IISI…ASSA. At S121 the chain carries Phosphoserine.

Interacts (via C-terminus) with TRPA1 and TRPV1. Interacts with TASOR. As to expression, expressed in neurons of the myenteric and submucosal plexuses in the gastric body, jejunum and proximal colon. Expressed in arterial endothelial cells and neurons of the central nervous system and peripheral nervous system. Expressed in umbilical artery endothelial cells (at protein level).

It localises to the cell membrane. The protein resides in the membrane. Its subcellular location is the perikaryon. It is found in the cytoplasm. The protein localises to the perinuclear region. It localises to the endoplasmic reticulum. In terms of biological role, plays a role during embryonic arterial endothelium differentiation and vascular morphogenesis through the ACVRL1 receptor-dependent signaling pathway upon stimulation by bone morphogenetic proteins, such as GDF2/BMP9 and BMP10. Involved in the regulation of nociception, acting as a modulator of the interaction between TRPA1 and TRPV1, two molecular sensors and mediators of pain signals in dorsal root ganglia (DRG) neurons. Mechanistically, it weakens their interaction, thereby releasing the inhibition of TRPA1 by TRPV1 and increasing the single-channel open probability of the TRPA1-TRPV1 complex. This Homo sapiens (Human) protein is Transmembrane protein 100 (TMEM100).